The sequence spans 240 residues: Ribosomal RNA large subunit methyltransferase E (240 aa).

Positions 1-20 are enriched in gly residues; the sequence is MSKAGGNKGGSRTGGRGGAG. Residues 1 to 40 form a disordered region; sequence MSKAGGNKGGSRTGGRGGAGSSNLHVRVKKKAGTTKESSR. Positions 92, 94, 115, 131, and 155 each coordinate S-adenosyl-L-methionine. The active-site Proton acceptor is Lys195.

Belongs to the class I-like SAM-binding methyltransferase superfamily. RNA methyltransferase RlmE family.

It localises to the cytoplasm. It catalyses the reaction uridine(2552) in 23S rRNA + S-adenosyl-L-methionine = 2'-O-methyluridine(2552) in 23S rRNA + S-adenosyl-L-homocysteine + H(+). In terms of biological role, specifically methylates the uridine in position 2552 of 23S rRNA at the 2'-O position of the ribose in the fully assembled 50S ribosomal subunit. This Brucella ovis (strain ATCC 25840 / 63/290 / NCTC 10512) protein is Ribosomal RNA large subunit methyltransferase E.